Consider the following 180-residue polypeptide: Ribosome-recycling factor (180 aa).

It belongs to the RRF family.

The protein resides in the cytoplasm. Functionally, responsible for the release of ribosomes from messenger RNA at the termination of protein biosynthesis. May increase the efficiency of translation by recycling ribosomes from one round of translation to another. This chain is Ribosome-recycling factor, found in Chlamydia felis (strain Fe/C-56) (Chlamydophila felis).